The following is a 693-amino-acid chain: Polyribonucleotide nucleotidyltransferase (693 aa).

Residues aspartate 489 and aspartate 495 each contribute to the Mg(2+) site. The region spanning proline 556 to isoleucine 615 is the KH domain. The region spanning glycine 625 to arginine 693 is the S1 motif domain.

This sequence belongs to the polyribonucleotide nucleotidyltransferase family. Component of the RNA degradosome, which is a multiprotein complex involved in RNA processing and mRNA degradation. Mg(2+) is required as a cofactor.

The protein localises to the cytoplasm. The catalysed reaction is RNA(n+1) + phosphate = RNA(n) + a ribonucleoside 5'-diphosphate. Involved in mRNA degradation. Catalyzes the phosphorolysis of single-stranded polyribonucleotides processively in the 3'- to 5'-direction. In Francisella tularensis subsp. holarctica (strain OSU18), this protein is Polyribonucleotide nucleotidyltransferase.